Consider the following 254-residue polypeptide: Alcohol dehydrogenase (254 aa).

10 to 33 (FVAGLGGIGLDTSREIVKSGPKNL) contacts NAD(+). Position 138 (S138) interacts with substrate. Catalysis depends on Y151, which acts as the Proton acceptor.

Belongs to the short-chain dehydrogenases/reductases (SDR) family. As to quaternary structure, homodimer.

It catalyses the reaction a primary alcohol + NAD(+) = an aldehyde + NADH + H(+). It carries out the reaction a secondary alcohol + NAD(+) = a ketone + NADH + H(+). This Drosophila flavomontana (Fruit fly) protein is Alcohol dehydrogenase (Adh).